We begin with the raw amino-acid sequence, 430 residues long: DNA repair protein recA homolog 3, mitochondrial (430 aa).

A mitochondrion-targeting transit peptide spans 1–35; sequence MARILRNVYSLRSSLFSSELLRRSVVGTSFQLRGF. 119–126 is a binding site for ATP; the sequence is GPEASGKT. Residues 385–415 are disordered; the sequence is DEAADKETESESEEEDSLRVVVSPDNTDDES.

The protein belongs to the RecA family.

The protein resides in the mitochondrion. Involved in recombination ability and DNA strand transfer activity. This chain is DNA repair protein recA homolog 3, mitochondrial, found in Arabidopsis thaliana (Mouse-ear cress).